The sequence spans 118 residues: uncharacterized protein (118 aa).

This is an uncharacterized protein from Rickettsia prowazekii (strain Madrid E).